We begin with the raw amino-acid sequence, 354 residues long: Trans-enoyl reductase pydC (354 aa).

The Enoyl reductase (ER) domain occupies 16–342; that stretch reads ANTDPVTFEI…RREVSGEKIV (327 aa). Residues 51–54, 180–183, Tyr-198, 245–246, and 336–337 each bind NADP(+); these read CDYK, SPKN, FE, and VS.

Belongs to the zinc-containing alcohol dehydrogenase family. As to quaternary structure, monomer.

The protein operates within mycotoxin biosynthesis. Trans-enoyl reductase; part of the gene cluster that mediates the biosynthesis of pyrrocidines, fungal natural products containing a macrocyclic para-cyclophane connected to a decahydrofluorene ring system that show potent antibiotic activities toward Gram-negative bacteria. Within the pathway, the PKS-NRPS pydA, with the help of the trans-enoyl reductase pydC, synthesize the polyketide-tyrosyl acyl thioester product which can be reductively off-loaded by the terminal reductase (R) domain in pydA. The PKS module of pydA acts in combination with the trans-acting enoyl reductase pydC to produce a methylated polyketide attached to the ACP domain. In parallel, the adenylation (A) domain of the NRPS module activated L-tyrosine, which is then transferred to the ACP domain. The condensation (C) domain subsequently link this group to the polyketide chain, forming an enzyme-bound amide. The alpha/beta hydrolase pydG is then required to catalyze the subsequent Knoevenagel condensation that affords the 3-pyrrolin-2-one ring, whereas the four proteins pydB, pydE, pydX and pydZ then function synergistically to form the cyclophane. PydB and the membrane-bound pydX and pydZ are lipid-binding proteins that can sequester and mold the pdyG product into the inverse S-shape. Binding of the medium chain reductase pydE to the complex would trigger the cascade oxidative cyclization. PydY is involved in the Diels-Alder cycloaddition that forms the decahydrofluorene core. Additional non-enzymatic hydroxylation yields pyrrocidine A2 which can be further reduced into pyrrocidine B by an endogenous reductase. The protein is Trans-enoyl reductase pydC of Acremonium sp.